We begin with the raw amino-acid sequence, 162 residues long: Endoribonuclease YbeY (162 aa).

Zn(2+)-binding residues include His-117, His-121, and His-127.

The protein belongs to the endoribonuclease YbeY family. Zn(2+) serves as cofactor.

It is found in the cytoplasm. Functionally, single strand-specific metallo-endoribonuclease involved in late-stage 70S ribosome quality control and in maturation of the 3' terminus of the 16S rRNA. The sequence is that of Endoribonuclease YbeY from Francisella tularensis subsp. holarctica (strain OSU18).